The chain runs to 32 residues: Cyclotide glopa A (32 aa).

The segment at residues 1 to 32 is a cross-link (cyclopeptide (Gly-Asn)); sequence GGSIPCIETCVWTGCFLVPGCSCKSDKKCYLN. Cystine bridges form between Cys-6-Cys-21, Cys-10-Cys-23, and Cys-15-Cys-29.

This is a cyclic peptide.

In terms of biological role, probably participates in a plant defense mechanism. The sequence is that of Cyclotide glopa A from Gloeospermum pauciflorum.